We begin with the raw amino-acid sequence, 466 residues long: Cysteine--tRNA ligase (466 aa).

Cysteine 27 contributes to the Zn(2+) binding site. The short motif at proline 29–histidine 39 is the 'HIGH' region element. The Zn(2+) site is built by cysteine 208, histidine 238, and glutamate 242. A 'KMSKS' region motif is present at residues lysine 270–serine 274. Lysine 273 is a binding site for ATP.

This sequence belongs to the class-I aminoacyl-tRNA synthetase family. Monomer. Zn(2+) is required as a cofactor.

It localises to the cytoplasm. The enzyme catalyses tRNA(Cys) + L-cysteine + ATP = L-cysteinyl-tRNA(Cys) + AMP + diphosphate. The polypeptide is Cysteine--tRNA ligase (Sulfurimonas denitrificans (strain ATCC 33889 / DSM 1251) (Thiomicrospira denitrificans (strain ATCC 33889 / DSM 1251))).